A 352-amino-acid polypeptide reads, in one-letter code: uncharacterized protein (352 aa).

The disordered stretch occupies residues 1-40 (MTSTMKLFTDHAEISVRERPPQRNNNNQEQDNSNRPAPRR). Basic and acidic residues predominate over residues 8-21 (FTDHAEISVRERPP). The segment covering 22-36 (QRNNNNQEQDNSNRP) has biased composition (low complexity). A helical transmembrane segment spans residues 317 to 333 (MTITLPCGLTIAFFVYY).

The protein localises to the host cell membrane. This is an uncharacterized protein from Diadromus pulchellus idnoreovirus 1 (DpIRV-1).